We begin with the raw amino-acid sequence, 321 residues long: uncharacterized protein (321 aa).

Residues 1-12 (MSMFLKKQKKTK) show a composition bias toward basic residues. 2 disordered regions span residues 1–59 (MSMF…MRKT) and 71–289 (EDCT…GPED). Residues 50–59 (DGIKETMRKT) show a composition bias toward basic and acidic residues. Over residues 99–115 (DDSDSESSEDGGEDDEE) the composition is skewed to acidic residues. Over residues 156–175 (SDSSSSSSSSSDSESSSSSD) the composition is skewed to low complexity. The span at 179-189 (DGDRSTPEPDI) shows a compositional bias: basic and acidic residues. Residues 231-242 (EPSPLRAAAAAA) show a composition bias toward low complexity.

This is an uncharacterized protein from Equus caballus (Horse).